Consider the following 201-residue polypeptide: Phospholipase A2 inhibitor NAI (201 aa).

The N-terminal stretch at 1-19 is a signal peptide; sequence MKSLQIICLLFVLVARGSC. Disulfide bonds link Cys-22-Cys-47, Cys-25-Cys-32, Cys-40-Cys-68, Cys-74-Cys-95, Cys-96-Cys-101, Cys-119-Cys-144, Cys-137-Cys-166, and Cys-170-Cys-191. Residue Asn-176 is glycosylated (N-linked (GlcNAc...) asparagine).

It belongs to the CNF-like-inhibitor family. Heterotrimer of 2 subunits A and 1 subunit B; non-covalently linked. In terms of processing, N-glycosylated, probably by biantennary structure. Glycosylation does not change PLA2 inhibitory activity. As to expression, expressed by the liver.

Its subcellular location is the secreted. In terms of biological role, inhibits the enzymatic activity of all phospholipase A2 tested, binding them with micromole to nanomole affinity. This is Phospholipase A2 inhibitor NAI from Notechis ater (Black tiger snake).